Reading from the N-terminus, the 167-residue chain is Bacterial non-heme ferritin (167 aa).

Residues 1–145 enclose the Ferritin-like diiron domain; sequence MLSKDIIKLL…DILDKIELIG (145 aa). Residues Glu-17, Glu-50, His-53, Glu-94, and Gln-127 each coordinate Fe cation.

The protein belongs to the ferritin family. Prokaryotic subfamily. As to quaternary structure, homooligomer of 24 subunits that assemble into a spherical protein shell (12 +/- 1 nM diameter) that can sequester at least 2000 iron atoms.

It localises to the cytoplasm. It catalyses the reaction 4 Fe(2+) + O2 + 6 H2O = 4 iron(III) oxide-hydroxide + 12 H(+). Functionally, iron-storage protein. The chain is Bacterial non-heme ferritin (ftnA) from Helicobacter pylori (strain ATCC 700392 / 26695) (Campylobacter pylori).